The sequence spans 296 residues: Protoheme IX farnesyltransferase (296 aa).

The Cytoplasmic segment spans residues 1–9 (MMFKQYLQV). A helical membrane pass occupies residues 10 to 28 (TKPGIIFGNLISVIGGFLL). Over 29-37 (ASKGSIDYP) the chain is Periplasmic. Residues 38–56 (LFIYTLVGVSLVVASGCVF) traverse the membrane as a helical segment. Residues 57 to 78 (NNFIDRDIDRKMERTKNRVLVK) are Cytoplasmic-facing. A helical transmembrane segment spans residues 79–97 (GLISPGVSLVYATLLGIAG). Residues 98–107 (FMLLWFGANP) lie on the Periplasmic side of the membrane. The helical transmembrane segment at 108 to 126 (LACWLGVMGFVVYVGIYSL) threads the bilayer. At 127-197 (YMKRHSVYGT…YQAANIPVLP (71 aa)) the chain is on the cytoplasmic side. A helical transmembrane segment spans residues 198-216 (VVKGISVAKNHITLYIIAF). Topologically, residues 217–228 (AVATLMLTLGGY) are periplasmic. The chain crosses the membrane as a helical span at residues 229–247 (AGYKYLVVAAAVSVWWLGM). At 248–268 (ALRGYKVEDDKVWARKLFGFS) the chain is on the cytoplasmic side. A helical transmembrane segment spans residues 269–287 (IIAITALSIMMSVDFMVPN). Residues 288–296 (SQSLLTYVW) lie on the Periplasmic side of the membrane.

It belongs to the UbiA prenyltransferase family. Protoheme IX farnesyltransferase subfamily.

The protein resides in the cell inner membrane. It catalyses the reaction heme b + (2E,6E)-farnesyl diphosphate + H2O = Fe(II)-heme o + diphosphate. The protein operates within porphyrin-containing compound metabolism; heme O biosynthesis; heme O from protoheme: step 1/1. Its function is as follows. Converts heme B (protoheme IX) to heme O by substitution of the vinyl group on carbon 2 of heme B porphyrin ring with a hydroxyethyl farnesyl side group. The chain is Protoheme IX farnesyltransferase from Salmonella arizonae (strain ATCC BAA-731 / CDC346-86 / RSK2980).